We begin with the raw amino-acid sequence, 152 residues long: Nucleoside diphosphate kinase (152 aa).

The ATP site is built by Lys11, Phe59, Arg87, Thr93, Arg104, and Asn114. The active-site Pros-phosphohistidine intermediate is His117.

This sequence belongs to the NDK family. Homotetramer. Mg(2+) is required as a cofactor.

The protein resides in the cytoplasm. The enzyme catalyses a 2'-deoxyribonucleoside 5'-diphosphate + ATP = a 2'-deoxyribonucleoside 5'-triphosphate + ADP. It catalyses the reaction a ribonucleoside 5'-diphosphate + ATP = a ribonucleoside 5'-triphosphate + ADP. In terms of biological role, major role in the synthesis of nucleoside triphosphates other than ATP. The ATP gamma phosphate is transferred to the NDP beta phosphate via a ping-pong mechanism, using a phosphorylated active-site intermediate. The chain is Nucleoside diphosphate kinase from Prochlorococcus marinus (strain MIT 9312).